The sequence spans 138 residues: Acidic phospholipase A2 Cvv-E6b (138 aa).

The N-terminal stretch at 1-16 (MRTLWILAVLLLGVEG) is a signal peptide. 7 disulfide bridges follow: C42–C131, C44–C60, C59–C111, C65–C138, C66–C104, C73–C97, and C91–C102. Ca(2+)-binding residues include Y43, G45, and G47. H63 is a catalytic residue. D64 is a binding site for Ca(2+). Residue D105 is part of the active site.

Requires Ca(2+) as cofactor. As to expression, expressed by the venom gland.

It is found in the secreted. The catalysed reaction is a 1,2-diacyl-sn-glycero-3-phosphocholine + H2O = a 1-acyl-sn-glycero-3-phosphocholine + a fatty acid + H(+). Snake venom phospholipase A2 (PLA2) that shows very low inhibition of ADP-induced platelet aggregation in platelet-rich plasma of human, rabbit and guinea pig. PLA2 catalyzes the calcium-dependent hydrolysis of the 2-acyl groups in 3-sn-phosphoglycerides. This chain is Acidic phospholipase A2 Cvv-E6b, found in Crotalus viridis viridis (Prairie rattlesnake).